A 271-amino-acid polypeptide reads, in one-letter code: Aquaporin-1 (271 aa).

The Cytoplasmic segment spans residues 1 to 11 (MASEFKKKIFW). A helical membrane pass occupies residues 12–29 (RAVVAEFLAMTLFIFISI). The Extracellular portion of the chain corresponds to 30-48 (GSALGFQYPVRNNQTSGAA). The N-linked (GlcNAc...) asparagine glycan is linked to asparagine 42. Residues 49–67 (QDNVKVSLAFGLSIATLAQ) traverse the membrane as a helical segment. The Cytoplasmic segment spans residues 68 to 70 (SVG). An intramembrane segment occupies 71–84 (HISGAHLNPAVTLG). The NPA 1 signature appears at 78–80 (NPA). The Cytoplasmic segment spans residues 85-92 (LLLSCQIS). A helical membrane pass occupies residues 93-111 (VLRAVMYIIAQCVGAIVAT). The Extracellular portion of the chain corresponds to 112 to 135 (AILSGITSSLPGNSLGLNSLAPGV). The helical transmembrane segment at 136-155 (DSGQGLGIEIIGTLQLVLCV) threads the bilayer. The Cytoplasmic portion of the chain corresponds to 156–165 (LATTDRRRRD). The chain crosses the membrane as a helical span at residues 166–183 (LGGSAPLAIGFSVALGHL). The Extracellular portion of the chain corresponds to 184–188 (LAIDY). Residues 189–201 (TGCGINPARSFGS) lie within the membrane without spanning it. The short motif at 194–196 (NPA) is the NPA 2 element. Topologically, residues 202–208 (AVITHNF) are extracellular. Residues 209–226 (QDHWVFWVGPFIGGALAV) traverse the membrane as a helical segment. The Cytoplasmic portion of the chain corresponds to 227–271 (LIYDFILAPRSSDLTDRVKVWTSGQVEEYDLDGDDINSRVEMKPK). The residue at position 249 (serine 249) is a Phosphoserine. Tyrosine 255 bears the Phosphotyrosine mark. Residue serine 264 is modified to Phosphoserine.

Belongs to the MIP/aquaporin (TC 1.A.8) family. Homotetramer; each monomer provides an independent water pore. Component of the ankyrin-1 complex in the erythrocyte, composed of ANK1, RHCE, RHAG, SLC4A1, EPB42, GYPA, GYPB and AQP1. Interacts with EPHB2; involved in endolymph production in the inner ear. Identified in a complex with STOM. Interacts (via the N-terminal) with ANK1 (via ANK 1-5 repeats). Interacts (via the C-terminal) with EPB42.

The protein localises to the cell membrane. The enzyme catalyses H2O(in) = H2O(out). It catalyses the reaction nitric oxide(out) = nitric oxide(in). It carries out the reaction CO2(out) = CO2(in). The catalysed reaction is glycerol(in) = glycerol(out). The enzyme catalyses H2O2(out) = H2O2(in). It catalyses the reaction K(+)(in) = K(+)(out). It carries out the reaction Na(+)(in) = Na(+)(out). Its function is as follows. Forms a water channel that facilitates the transport of water across cell membranes, playing a crucial role in water homeostasis in various tissues. Could also be permeable to small solutes including hydrogen peroxide, glycerol and gases such as amonnia (NH3), nitric oxide (NO) and carbon dioxide (CO2). Recruited to the ankyrin-1 complex, a multiprotein complex of the erythrocyte membrane, it could be part of a CO2 metabolon, linking facilitated diffusion of CO2 across the membrane, anion exchange of Cl(-)/HCO3(-) and interconversion of dissolved CO2 and carbonic acid in the cytosol. In vitro, it shows non-selective gated cation channel activity and may be permeable to cations like K(+) and Na(+) in vivo. The polypeptide is Aquaporin-1 (Sus scrofa (Pig)).